Consider the following 87-residue polypeptide: Small ribosomal subunit protein bS16 (87 aa).

Belongs to the bacterial ribosomal protein bS16 family.

The chain is Small ribosomal subunit protein bS16 from Nitrosospira multiformis (strain ATCC 25196 / NCIMB 11849 / C 71).